A 376-amino-acid polypeptide reads, in one-letter code: Chaperone protein DnaJ (376 aa).

The J domain maps to 4 to 68; it reads DYYDILGVDR…DTRSRYDQFG (65 aa). A CR-type zinc finger spans residues 135–217; the sequence is GGEKEIRIPH…CNGAGRRQVT (83 aa). Cysteine 148, cysteine 151, cysteine 165, cysteine 168, cysteine 191, cysteine 194, cysteine 205, and cysteine 208 together coordinate Zn(2+). CXXCXGXG motif repeat units lie at residues 148–155, 165–172, 191–198, and 205–212; these read CQVCKGDG, CSTCNGQG, CPACNGQG, and CEVCNGAG.

Belongs to the DnaJ family. Homodimer. Requires Zn(2+) as cofactor.

Its subcellular location is the cytoplasm. In terms of biological role, participates actively in the response to hyperosmotic and heat shock by preventing the aggregation of stress-denatured proteins and by disaggregating proteins, also in an autonomous, DnaK-independent fashion. Unfolded proteins bind initially to DnaJ; upon interaction with the DnaJ-bound protein, DnaK hydrolyzes its bound ATP, resulting in the formation of a stable complex. GrpE releases ADP from DnaK; ATP binding to DnaK triggers the release of the substrate protein, thus completing the reaction cycle. Several rounds of ATP-dependent interactions between DnaJ, DnaK and GrpE are required for fully efficient folding. Also involved, together with DnaK and GrpE, in the DNA replication of plasmids through activation of initiation proteins. The polypeptide is Chaperone protein DnaJ (Crocosphaera subtropica (strain ATCC 51142 / BH68) (Cyanothece sp. (strain ATCC 51142))).